Reading from the N-terminus, the 474-residue chain is ATP synthase subunit beta (474 aa).

152-159 is an ATP binding site; that stretch reads GGAGVGKT.

It belongs to the ATPase alpha/beta chains family. As to quaternary structure, F-type ATPases have 2 components, CF(1) - the catalytic core - and CF(0) - the membrane proton channel. CF(1) has five subunits: alpha(3), beta(3), gamma(1), delta(1), epsilon(1). CF(0) has three main subunits: a(1), b(2) and c(9-12). The alpha and beta chains form an alternating ring which encloses part of the gamma chain. CF(1) is attached to CF(0) by a central stalk formed by the gamma and epsilon chains, while a peripheral stalk is formed by the delta and b chains.

Its subcellular location is the cell inner membrane. The catalysed reaction is ATP + H2O + 4 H(+)(in) = ADP + phosphate + 5 H(+)(out). Produces ATP from ADP in the presence of a proton gradient across the membrane. The catalytic sites are hosted primarily by the beta subunits. This is ATP synthase subunit beta from Paramagnetospirillum magneticum (strain ATCC 700264 / AMB-1) (Magnetospirillum magneticum).